Reading from the N-terminus, the 594-residue chain is Transcription factor TFIIIB component B'' (594 aa).

The segment at 1-169 is disordered; sequence MSSIVNKSGT…ARRLSTISNK (169 aa). Ser-49 carries the phosphoserine modification. Positions 150-168 are enriched in polar residues; it reads LDSSSNSNGTARRLSTISN. Ser-178 carries the phosphoserine modification. Disordered stretches follow at residues 217–245 and 317–343; these read SPPT…DENE and ARQE…KEER. 2 stretches are compositionally biased toward basic and acidic residues: residues 225–241 and 317–330; these read SLDR…SREA and ARQE…LTKE. In terms of domain architecture, SANT spans 415 to 466; it reads SYTDPWTVEEMIKFYKALSMWGTDFNLISQLYPYRSRKQVKAKFVNEEKKRP. Positions 520-529 are enriched in basic and acidic residues; sequence KNTAKEEDQT. Disordered stretches follow at residues 520-547 and 567-594; these read KNTA…GGIM and LKRK…EIDQ. Residues 579–594 show a composition bias toward acidic residues; it reads DNEDNEGSEEEPEIDQ.

This sequence belongs to the TFC5 family. As to quaternary structure, TFIIIB comprises the TATA-binding protein (TBP), the B-related factor (BRF) and the B'' component (BDP1). Interacts with TFC4.

It localises to the nucleus. General activator of RNA polymerase III transcription. This Saccharomyces cerevisiae (strain ATCC 204508 / S288c) (Baker's yeast) protein is Transcription factor TFIIIB component B'' (BDP1).